The chain runs to 531 residues: Polyamine transporter PUT1 (531 aa).

The disordered stretch occupies residues 1 to 76; it reads MADTGGRPEV…LPDGDAGGPM (76 aa). Over residues 17 to 33 the composition is skewed to low complexity; it reads SPGHPAASTTAAAAADL. The segment covering 34-44 has biased composition (basic and acidic residues); that stretch reads GHADTGQEKPT. 12 helical membrane passes run 83 to 103, 113 to 133, 147 to 167, 193 to 213, 224 to 244, 262 to 284, 296 to 316, 341 to 361, 391 to 411, 414 to 434, 453 to 473, and 476 to 496; these read VSMIPLIFLIFYEVSGGPFGI, LLAIIGFLVLPVIWSIPEALI, YVVWVASALGPYWGFQQGWMK, LGGGAPRAFAVVGLTAVLTLL, VAICLGVFSLLPFFVMGLIAL, WNLYLNTLFWNLNYWDSISTLAG, ALFYAVIFVVVAYLYPLLAGT, AWLMWWVQSAAALSNMGMFVA, TPLAGILFSASGVLLLSMMSF, IVAAENFLYCFGMLLEFVAFI, TAGCVAMLVPPTALIAVVLAL, and LKVAVVSLGAVAMGLVLQPAL.

Belongs to the amino acid-polyamine-organocation (APC) superfamily. Polyamine:cation symporter (PHS) (TC 2.A.3.12) family. As to expression, expressed in seedling roots, leaves, stems, flowers and siliques.

Its subcellular location is the cell membrane. Functionally, cell membrane polyamine/proton symporter involved in the polyamine uptake in cells. Possesses high affinity for spermidine and lower affinity for spermine and putrescine. Transports paraquat, a polyamine analog, and thus confers sensitivity to this chemical which is used as a herbicide. This Oryza sativa subsp. japonica (Rice) protein is Polyamine transporter PUT1 (PUT1).